Consider the following 84-residue polypeptide: Envelope glycoprotein N (84 aa).

Positions 1–26 (MSCKKGARQRLYVSLWLFYILVFAAA) are cleaved as a signal peptide. Residues 27-45 (TEMDFYSSECHSHTYEIVL) lie on the Virion surface side of the membrane. The helical transmembrane segment at 46 to 66 (NSFSSIWLLINLFLLLCSFAI) threads the bilayer. Over 67–84 (FLKYWCYKTFASETVKGY) the chain is Intravirion.

It belongs to the herpesviridae glycoprotein N family. In terms of assembly, interacts (via N-terminus) with gM (via N-terminus). The gM-gN heterodimer forms the gCII complex.

It is found in the virion membrane. Its subcellular location is the host membrane. The protein localises to the host Golgi apparatus. It localises to the host trans-Golgi network. Functionally, envelope glycoprotein necessary for proper maturation of gM and modulation of its membrane fusion activity. Also plays a critical role in virion morphogenesis. In Human herpesvirus 6B (strain Z29) (HHV-6 variant B), this protein is Envelope glycoprotein N.